Consider the following 139-residue polypeptide: Holo-[acyl-carrier-protein] synthase (139 aa).

The Mg(2+) site is built by aspartate 8 and glutamate 61.

This sequence belongs to the P-Pant transferase superfamily. AcpS family. Requires Mg(2+) as cofactor.

It localises to the cytoplasm. The catalysed reaction is apo-[ACP] + CoA = holo-[ACP] + adenosine 3',5'-bisphosphate + H(+). In terms of biological role, transfers the 4'-phosphopantetheine moiety from coenzyme A to a Ser of acyl-carrier-protein. The sequence is that of Holo-[acyl-carrier-protein] synthase from Bradyrhizobium diazoefficiens (strain JCM 10833 / BCRC 13528 / IAM 13628 / NBRC 14792 / USDA 110).